The chain runs to 221 residues: UPF0758 protein HI_0952 (221 aa).

The MPN domain maps to 99–221 (IINDPETVKL…CYSFAENCLL (123 aa)). Zn(2+) is bound by residues H170, H172, and D183. Positions 170-183 (HNHPSGITEPSYSD) match the JAMM motif motif.

This sequence belongs to the UPF0758 family.

This is UPF0758 protein HI_0952 from Haemophilus influenzae (strain ATCC 51907 / DSM 11121 / KW20 / Rd).